A 5121-amino-acid chain; its full sequence is Hydrocephalus-inducing protein homolog (5121 aa).

The tract at residues 363-754 is interaction with KIF9; that stretch reads EFFEECITDP…VLFSSPTPSG (392 aa). Basic residues predominate over residues 956–967; the sequence is LSKKGRVKKGHA. 7 disordered regions span residues 956 to 987, 1925 to 1951, 2155 to 2186, 2333 to 2459, 2482 to 2534, 2664 to 2684, and 3852 to 3874; these read LSKKGRVKKGHAHVQPQPSGSQEPRDPQSPVF, LAQENEEEDITSSDQGTSNSTKRTSLS, SKADSHGSGSQKQHHSHQSETPQISSSPLPPG, EQER…KFKT, LPPA…AERE, TNTTKAQEEQTSSSKGGKQKM, and KPDHQGSAQKDQLSQGTMHTGST. Residues 1908–1933 adopt a coiled-coil conformation; sequence EIKKSKEEQMRAKYLENLAQENEEED. Residues 1936 to 1951 are compositionally biased toward polar residues; sequence SSDQGTSNSTKRTSLS. A coiled-coil region spans residues 2267–2365; it reads AQDYAAMKAQ…EDELKRRVKK (99 aa). 5 stretches are compositionally biased toward basic and acidic residues: residues 2333 to 2360, 2393 to 2418, 2444 to 2453, 2489 to 2498, and 2509 to 2534; these read EQERLAKEMQEKKLQQELERQKEEDELK, VDVKMETIERKISVREQTMSEKEELN, DNSKDPDKQL, EAPHEPDDQR, and KDRERERLEKERTEKERLEREKAERE. Positions 2504–2549 form a coiled coil; it reads GRRGRKDRERERLEKERTEKERLEREKAERERLEKLRALEERSDWE. 2 stretches are compositionally biased toward polar residues: residues 2664–2679 and 3857–3874; these read TNTTKAQEEQTSSSKG and GSAQKDQLSQGTMHTGST.

As to quaternary structure, interacts with KIF9.

It is found in the cell projection. The protein resides in the cilium. The protein localises to the cytoplasm. It localises to the cytoskeleton. Its subcellular location is the cilium axoneme. It is found in the flagellum. Required for ciliary motility. The sequence is that of Hydrocephalus-inducing protein homolog (HYDIN) from Homo sapiens (Human).